Consider the following 197-residue polypeptide: MTLDIVNWKAIVEALLYAAGDEGLTKKQLLSVLEVDEAELLDIMLDVKETYEKEDRGIELVEYADTYMLSTKKEFAVYLKKLIEAPSKGLSQAALEVLAIVSYKQPITRAEVEEIRGVKSERILQSLVAKALLCEVGRADGPGRAILYGTTETFLEQFGLKTLEELPPLPENVEEDGVQEEADLFFENFNQTFEDLK.

It belongs to the ScpB family. In terms of assembly, homodimer. Homodimerization may be required to stabilize the binding of ScpA to the Smc head domains. Component of a cohesin-like complex composed of ScpA, ScpB and the Smc homodimer, in which ScpA and ScpB bind to the head domain of Smc. The presence of the three proteins is required for the association of the complex with DNA.

It localises to the cytoplasm. In terms of biological role, participates in chromosomal partition during cell division. May act via the formation of a condensin-like complex containing Smc and ScpA that pull DNA away from mid-cell into both cell halves. The chain is Segregation and condensation protein B from Bacillus licheniformis (strain ATCC 14580 / DSM 13 / JCM 2505 / CCUG 7422 / NBRC 12200 / NCIMB 9375 / NCTC 10341 / NRRL NRS-1264 / Gibson 46).